The following is a 462-amino-acid chain: Cysteine--tRNA ligase (462 aa).

A Zn(2+)-binding site is contributed by Cys-24. Positions 26-36 (PTVYDDAHLGH) match the 'HIGH' region motif. Zn(2+) is bound by residues Cys-199, His-224, and Glu-228. The short motif at 256–260 (KMSKS) is the 'KMSKS' region element. Lys-259 is a binding site for ATP.

It belongs to the class-I aminoacyl-tRNA synthetase family. In terms of assembly, monomer. The cofactor is Zn(2+).

It localises to the cytoplasm. It carries out the reaction tRNA(Cys) + L-cysteine + ATP = L-cysteinyl-tRNA(Cys) + AMP + diphosphate. This Campylobacter jejuni subsp. jejuni serotype O:23/36 (strain 81-176) protein is Cysteine--tRNA ligase.